The primary structure comprises 443 residues: ATP-dependent protease ATPase subunit HslU (443 aa).

Residues Ile-18, 60 to 65, Asp-256, Glu-321, and Arg-393 contribute to the ATP site; that span reads GVGKTE.

This sequence belongs to the ClpX chaperone family. HslU subfamily. As to quaternary structure, a double ring-shaped homohexamer of HslV is capped on each side by a ring-shaped HslU homohexamer. The assembly of the HslU/HslV complex is dependent on binding of ATP.

The protein resides in the cytoplasm. Its function is as follows. ATPase subunit of a proteasome-like degradation complex; this subunit has chaperone activity. The binding of ATP and its subsequent hydrolysis by HslU are essential for unfolding of protein substrates subsequently hydrolyzed by HslV. HslU recognizes the N-terminal part of its protein substrates and unfolds these before they are guided to HslV for hydrolysis. The chain is ATP-dependent protease ATPase subunit HslU from Enterobacter sp. (strain 638).